A 41-amino-acid chain; its full sequence is Photosystem I reaction center subunit IX (41 aa).

A helical transmembrane segment spans residues 7 to 27 (YLSTAPVLATLWFGFLAGLLI).

This sequence belongs to the PsaJ family.

Its subcellular location is the plastid. The protein resides in the chloroplast thylakoid membrane. Functionally, may help in the organization of the PsaE and PsaF subunits. The protein is Photosystem I reaction center subunit IX of Physcomitrium patens (Spreading-leaved earth moss).